We begin with the raw amino-acid sequence, 28 residues long: M-poneritoxin-Dq4b/U1-poneritoxin-Dq4c/U1-poneritoxin-Dq4d (28 aa).

Methionine 20 is modified (methionine sulfoxide; in form U1-PONTX-Dq4d). The residue at position 28 (alanine 28) is an Alanine amide; in form Dq-1362 and U1-PONTX-Dq4d.

Occurs in 3 forms, M-PONTX-Dq4b has an amidated Ala-28, U1-PONTX-Dq4d has an amidated Ala-28 and an oxidized Met-20, U1-PONTX-Dq4c has no modifications at either Met-20 or Ala-28. As to expression, expressed by the venom gland.

The protein resides in the secreted. M-poneritoxin-Dq4b: this synthetic peptide has antimicrobial activity against Gram-positive bacteria B.amyloliquefacies S499 (MIC=0.1 mM), L.monocytogenes 2231 and S.aureus ATCC 29213, against Gram-negative bacteria P.putida BTP1, P.aeruginosa PaO1 and E.coli ATCC 10536, and against the fungi S.cerevisiae, R.mucilaginosa and C.cucumerinum. Not active against the fungi F.oxysporum and B.cinerea. This Dinoponera quadriceps (South American ant) protein is M-poneritoxin-Dq4b/U1-poneritoxin-Dq4c/U1-poneritoxin-Dq4d.